The chain runs to 619 residues: CREB-regulated transcription coactivator 3 (619 aa).

The interval 1–103 (MAASPGSGSA…LVERPSRNRF (103 aa)) is required for interaction with HTLV-1 TAX. Residues serine 4 and serine 62 each carry the phosphoserine modification. The tract at residues 103–150 (FHPLHRRSGDKPGRQFDGSAFGANYSSQPLDESWPRQQPPWKDEKHPG) is disordered. Threonine 160 carries the phosphothreonine modification. At serine 162 the chain carries Phosphoserine; by SIK2. Polar residues predominate over residues 165–175 (ALHTSALSTKP). The tract at residues 165-185 (ALHTSALSTKPQDPYGGGGQS) is disordered. A Glycyl lysine isopeptide (Lys-Gly) (interchain with G-Cter in SUMO2) cross-link involves residue lysine 232. Residues serine 273, serine 329, serine 332, serine 370, serine 391, serine 396, serine 410, and serine 443 each carry the phosphoserine modification. The disordered stretch occupies residues 375-431 (STTNLSGPSRRRQPPVSPLTLSPGPEAHQGFSRQLSSTSPLAPYPTSQMVSSDRSQL). Positions 380 to 401 (SGPSRRRQPPVSPLTLSPGPEA) are required for interaction with PPP2CA and PPP2R1A. Residues 405–431 (FSRQLSSTSPLAPYPTSQMVSSDRSQL) show a composition bias toward polar residues.

The protein belongs to the TORC family. Binding, as a tetramer, through its N-terminal region, with the bZIP domain of CREB1 enhances recruitment of TAF4 to the promoter. 'Arg-314' in the bZIP domain of CREB1 is essential for this interaction. Interacts (when phosphorylated at Ser-162 and Se-273) with 14-3-3 proteins. Interacts with YWHAE. Interacts (when phosphorylated at Ser-391) with phosphatase PP2A catalytic subunit PPP2CA and regulatory subunits PPP2R1A and PPP2R2A. Interacts, via the N-terminal with the ankyrin repeats of BCL3, to form a complex with CREB1 on CRE and TxRE responsive elements and represses HTLV-1 LTR-mediated transcription. In terms of assembly, (Microbial infection) Interacts with HTLV-1 protein Tax; this interaction enhances tax transcriptional activity. Phosphorylation/dephosphorylation states of Ser-273 are required for regulating transduction of CREB activity. CRTCs/TORCs are inactive when phosphorylated, and active when dephosphorylated at this site. May be phosphorylated at Ser-391 by MAPK3/ERK1 and/or MAPK1/ERK2 or by some cyclin-dependent kinases such as CDK1,CDK2 or CDK5. Following adenylyl cyclase activation, dephosphorylated at Ser-162 and Ser-273 resulting in its dissociation from 14-3-3 proteins probably promoting CRTC3 translocation into the nucleus. As to expression, predominantly expressed in B and T lymphocytes. Highest levels in lung. Also expressed in brain, colon, heart, kidney, ovary, and prostate. Weak expression in liver, pancreas, muscle, small intestine, spleen and stomach.

The protein resides in the nucleus. The protein localises to the cytoplasm. Functionally, transcriptional coactivator for CREB1 which activates transcription through both consensus and variant cAMP response element (CRE) sites. Acts as a coactivator, in the SIK/TORC signaling pathway, being active when dephosphorylated and acts independently of CREB1 'Ser-133' phosphorylation. Enhances the interaction of CREB1 with TAF4. Regulates the expression of specific CREB-activated genes such as the steroidogenic gene, StAR. Potent coactivator of PPARGC1A and inducer of mitochondrial biogenesis in muscle cells. Also coactivator for TAX activation of the human T-cell leukemia virus type 1 (HTLV-1) long terminal repeats (LTR). This chain is CREB-regulated transcription coactivator 3 (CRTC3), found in Homo sapiens (Human).